The chain runs to 108 residues: Nucleoid-associated protein Pmen_2646 (108 aa).

Positions 1 to 25 (MMKGGMAGLMKQAQQMQEKMQKMQE) are disordered.

The protein belongs to the YbaB/EbfC family. In terms of assembly, homodimer.

It localises to the cytoplasm. Its subcellular location is the nucleoid. In terms of biological role, binds to DNA and alters its conformation. May be involved in regulation of gene expression, nucleoid organization and DNA protection. In Ectopseudomonas mendocina (strain ymp) (Pseudomonas mendocina), this protein is Nucleoid-associated protein Pmen_2646.